The sequence spans 355 residues: Probable protein phosphatase 2C 21 (355 aa).

The PPM-type phosphatase domain maps to 23-329; it reads RFGLSSMQGW…DNMTIILVQF (307 aa). Aspartate 57, glycine 58, aspartate 272, and aspartate 320 together coordinate Mn(2+). The tract at residues 329 to 355 is disordered; the sequence is FKKPNPSETEPEDSKPEPSEDEPSSSS.

It belongs to the PP2C family. It depends on Mg(2+) as a cofactor. Mn(2+) serves as cofactor.

The enzyme catalyses O-phospho-L-seryl-[protein] + H2O = L-seryl-[protein] + phosphate. It catalyses the reaction O-phospho-L-threonyl-[protein] + H2O = L-threonyl-[protein] + phosphate. The polypeptide is Probable protein phosphatase 2C 21 (PPC4-2) (Arabidopsis thaliana (Mouse-ear cress)).